Consider the following 301-residue polypeptide: Rhodopsin (301 aa).

Residues 1–18 (LHMIHLHWYQYPPMNPMM) are Extracellular-facing. The helical transmembrane segment at 19–43 (YPLLLIFMLFTGILCLAGNFVTIWV) threads the bilayer. Residues 44–55 (FMNTKSLRTPAN) are Cytoplasmic-facing. A helical membrane pass occupies residues 56–78 (LLVVNLAMSDFLMMFTMFPPMMV). Topologically, residues 79-92 (TCYYHTWTLGPTFC) are extracellular. A disulfide bond links C92 and C169. Residues 93–115 (QVYAFLGNLCGCASIWTMVFITF) form a helical membrane-spanning segment. Positions 116-118 (DRY) match the 'Ionic lock' involved in activated form stabilization motif. Residues 116-134 (DRYNVIVKGVAGEPLSNKK) lie on the Cytoplasmic side of the membrane. A helical transmembrane segment spans residues 135 to 155 (AAMWILSVWVLSTAWCMAPFF). Topologically, residues 156-182 (GWNSYVPEGNLTGCGTDYLSEDILSRS) are extracellular. The N-linked (GlcNAc...) asparagine glycan is linked to N165. A helical membrane pass occupies residues 183–204 (YLYIYSTWVYFLPLTITIYCYV). The Cytoplasmic segment spans residues 205 to 245 (FIIKAVAAHEKGMRDQAKKMGIKSLRNEEAQKTSAECRLAK). Residues 246–267 (IAMTTVALWFIAWTPYLLINWV) form a helical membrane-spanning segment. The Extracellular portion of the chain corresponds to 268–278 (GMFARSYLSPV). The chain crosses the membrane as a helical span at residues 279-300 (YTIWGYVFAKANAVYNPIVYAI). Position 288 is an N6-(retinylidene)lysine (K288).

This sequence belongs to the G-protein coupled receptor 1 family. Opsin subfamily. Homodimer. Interacts with GNAQ. Contains one covalently linked retinal chromophore.

It localises to the cell projection. The protein resides in the rhabdomere membrane. Functionally, photoreceptor required for image-forming vision at low light intensity. Can use both retinal and 3-dehydroretinal as visual pigment. Light-induced isomerization of 11-cis to all-trans retinal triggers a conformational change that activates signaling via G-proteins. Signaling via GNAQ probably mediates the activation of phospholipase C. The chain is Rhodopsin (RHO) from Faxonius virilis (Virile crayfish).